Consider the following 338-residue polypeptide: Fructose-1,6-bisphosphatase class 1 1 (338 aa).

Residues glutamate 88, aspartate 107, leucine 109, and aspartate 110 each coordinate Mg(2+). Residues 110-113 (DGSS) and asparagine 196 each bind substrate. Mg(2+) is bound at residue glutamate 268.

The protein belongs to the FBPase class 1 family. As to quaternary structure, homotetramer. Requires Mg(2+) as cofactor.

It localises to the cytoplasm. The enzyme catalyses beta-D-fructose 1,6-bisphosphate + H2O = beta-D-fructose 6-phosphate + phosphate. Its pathway is carbohydrate biosynthesis; Calvin cycle. This is Fructose-1,6-bisphosphatase class 1 1 from Bradyrhizobium sp. (strain BTAi1 / ATCC BAA-1182).